A 36-amino-acid chain; its full sequence is Potassium channel toxin alpha-KTx 2.7 (36 aa).

Disulfide bonds link C7–C29, C13–C34, and C17–C36.

The protein belongs to the short scorpion toxin superfamily. Potassium channel inhibitor family. Alpha-KTx 02 subfamily. In terms of tissue distribution, expressed by the venom gland.

The protein resides in the secreted. Its function is as follows. Inhibitor of voltage-gated potassium channels (Kv). This protein is capable of displacing the binding of radio-labeled noxiustoxin (AC P08815) to rat brain synaptosomes with high affinity (about 100 pM). It is also capable of inhibiting transient potassium-currents (resembling I(A)-type currents), in cultured rat cerebellar granule cells. About 50% of the peak currents are reduced by application of a 1.5 uM solution of this toxin. Is lethal to mice (when less than 100 ug are injected). This Centruroides limpidus (Mexican scorpion) protein is Potassium channel toxin alpha-KTx 2.7.